A 147-amino-acid chain; its full sequence is Elongation factor Tu (147 aa).

The protein belongs to the GTP-binding elongation factor family. EF-Tu/EF-1A subfamily. In terms of assembly, monomer.

It localises to the cytoplasm. This protein promotes the GTP-dependent binding of aminoacyl-tRNA to the A-site of ribosomes during protein biosynthesis. The chain is Elongation factor Tu (tuf) from Fructilactobacillus sanfranciscensis (Lactobacillus sanfranciscensis).